Reading from the N-terminus, the 243-residue chain is Small ribosomal subunit protein eS4 (243 aa).

One can recognise an S4 RNA-binding domain in the interval 43–105 (IPLLYIVRDY…TGEHYRVLPN (63 aa)).

It belongs to the eukaryotic ribosomal protein eS4 family.

This is Small ribosomal subunit protein eS4 (rps4e) from Pyrococcus abyssi (strain GE5 / Orsay).